Reading from the N-terminus, the 138-residue chain is Basic phospholipase A2 homolog CTs-K49a (138 aa).

The first 16 residues, 1–16 (MRTLWIMAVLLVVVEG), serve as a signal peptide directing secretion. 6 cysteine pairs are disulfide-bonded: cysteine 42–cysteine 131, cysteine 44–cysteine 60, cysteine 59–cysteine 111, cysteine 65–cysteine 138, cysteine 66–cysteine 104, and cysteine 91–cysteine 102. Positions 121–133 (KKKKINLKLFCKK) are important for membrane-damaging activities in eukaryotes and bacteria; heparin-binding.

It belongs to the phospholipase A2 family. Group II subfamily. K49 sub-subfamily. As to expression, expressed by the venom gland.

The protein localises to the secreted. Snake venom phospholipase A2 homolog that lacks catalytic activity. It shows myotoxic and weak anticoagulant activities. A model of myotoxic mechanism has been proposed: an apo Lys49-PLA2 is activated by the entrance of a hydrophobic molecule (e.g. fatty acid) at the hydrophobic channel of the protein leading to a reorientation of a monomer. This reorientation causes a transition between 'inactive' to 'active' states, causing alignment of C-terminal and membrane-docking sites (MDoS) side-by-side and putting the membrane-disruption sites (MDiS) in the same plane, exposed to solvent and in a symmetric position for both monomers. The MDoS region stabilizes the toxin on membrane by the interaction of charged residues with phospholipid head groups. Subsequently, the MDiS region destabilizes the membrane with penetration of hydrophobic residues. This insertion causes a disorganization of the membrane, allowing an uncontrolled influx of ions (i.e. calcium and sodium), and eventually triggering irreversible intracellular alterations and cell death. The sequence is that of Basic phospholipase A2 homolog CTs-K49a from Trimeresurus stejnegeri (Chinese green tree viper).